The primary structure comprises 151 residues: Deoxyuridine 5'-triphosphate nucleotidohydrolase (151 aa).

Substrate is bound by residues R70–G72, N83, L87–D89, and M97.

It belongs to the dUTPase family. The cofactor is Mg(2+).

It catalyses the reaction dUTP + H2O = dUMP + diphosphate + H(+). It functions in the pathway pyrimidine metabolism; dUMP biosynthesis; dUMP from dCTP (dUTP route): step 2/2. Functionally, this enzyme is involved in nucleotide metabolism: it produces dUMP, the immediate precursor of thymidine nucleotides and it decreases the intracellular concentration of dUTP so that uracil cannot be incorporated into DNA. In Pseudomonas putida (strain W619), this protein is Deoxyuridine 5'-triphosphate nucleotidohydrolase.